Here is a 172-residue protein sequence, read N- to C-terminus: Shikimate kinase (172 aa).

11 to 16 provides a ligand contact to ATP; it reads GAGKST. Ser-15 lines the Mg(2+) pocket. Substrate-binding residues include Asp-33, Arg-57, and Gly-79. An ATP-binding site is contributed by Arg-117. Arg-136 lines the substrate pocket. Arg-153 is a binding site for ATP.

Belongs to the shikimate kinase family. In terms of assembly, monomer. Mg(2+) serves as cofactor.

Its subcellular location is the cytoplasm. It carries out the reaction shikimate + ATP = 3-phosphoshikimate + ADP + H(+). The protein operates within metabolic intermediate biosynthesis; chorismate biosynthesis; chorismate from D-erythrose 4-phosphate and phosphoenolpyruvate: step 5/7. Catalyzes the specific phosphorylation of the 3-hydroxyl group of shikimic acid using ATP as a cosubstrate. The polypeptide is Shikimate kinase (Pseudomonas syringae pv. tomato (strain ATCC BAA-871 / DC3000)).